A 479-amino-acid chain; its full sequence is Ribosomal RNA small subunit methyltransferase F (479 aa).

Residues 125–131 (AAAPGSK), glutamate 149, aspartate 176, and aspartate 194 contribute to the S-adenosyl-L-methionine site. Residue cysteine 247 is the Nucleophile of the active site.

It belongs to the class I-like SAM-binding methyltransferase superfamily. RsmB/NOP family.

The protein localises to the cytoplasm. It catalyses the reaction cytidine(1407) in 16S rRNA + S-adenosyl-L-methionine = 5-methylcytidine(1407) in 16S rRNA + S-adenosyl-L-homocysteine + H(+). In terms of biological role, specifically methylates the cytosine at position 1407 (m5C1407) of 16S rRNA. This Escherichia coli O157:H7 (strain EC4115 / EHEC) protein is Ribosomal RNA small subunit methyltransferase F.